The sequence spans 273 residues: NADPH-dependent 7-cyano-7-deazaguanine reductase (273 aa).

A substrate-binding site is contributed by 81–83 (VES). 83–84 (SK) is a binding site for NADPH. The active-site Thioimide intermediate is the Cys-179. The Proton donor role is filled by Asp-186. Residue 218–219 (AE) participates in substrate binding. 247 to 248 (RG) lines the NADPH pocket.

This sequence belongs to the GTP cyclohydrolase I family. QueF type 2 subfamily. As to quaternary structure, homodimer.

Its subcellular location is the cytoplasm. The enzyme catalyses 7-aminomethyl-7-carbaguanine + 2 NADP(+) = 7-cyano-7-deazaguanine + 2 NADPH + 3 H(+). The protein operates within tRNA modification; tRNA-queuosine biosynthesis. In terms of biological role, catalyzes the NADPH-dependent reduction of 7-cyano-7-deazaguanine (preQ0) to 7-aminomethyl-7-deazaguanine (preQ1). The sequence is that of NADPH-dependent 7-cyano-7-deazaguanine reductase from Rickettsia felis (strain ATCC VR-1525 / URRWXCal2) (Rickettsia azadi).